The primary structure comprises 56 residues: PI-actitoxin-Afv2b (56 aa).

The region spanning 5–55 (CLLPMKVGPCRARVPRFYYNSSSGKCEGFTYGGCGANANKFQTKAQCEKAC) is the BPTI/Kunitz inhibitor domain. 3 cysteine pairs are disulfide-bonded: Cys-5–Cys-55, Cys-14–Cys-38, and Cys-30–Cys-51.

The protein belongs to the venom Kunitz-type family. Sea anemone type 2 potassium channel toxin subfamily. As to expression, expressed by acrorhagi.

It localises to the secreted. The protein resides in the nematocyst. Its function is as follows. Serine protease inhibitor that is strongly active against trypsin (900 IU/mg) and moderately active against plasmin. This Anthopleura fuscoviridis (Sea anemone) protein is PI-actitoxin-Afv2b.